We begin with the raw amino-acid sequence, 341 residues long: Phosphoribosylformylglycinamidine cyclo-ligase (341 aa).

It belongs to the AIR synthase family.

The protein resides in the cytoplasm. The enzyme catalyses 2-formamido-N(1)-(5-O-phospho-beta-D-ribosyl)acetamidine + ATP = 5-amino-1-(5-phospho-beta-D-ribosyl)imidazole + ADP + phosphate + H(+). It functions in the pathway purine metabolism; IMP biosynthesis via de novo pathway; 5-amino-1-(5-phospho-D-ribosyl)imidazole from N(2)-formyl-N(1)-(5-phospho-D-ribosyl)glycinamide: step 2/2. This Caldicellulosiruptor bescii (strain ATCC BAA-1888 / DSM 6725 / KCTC 15123 / Z-1320) (Anaerocellum thermophilum) protein is Phosphoribosylformylglycinamidine cyclo-ligase.